Consider the following 173-residue polypeptide: Translationally-controlled tumor protein homolog (173 aa).

Residues 1-173 (MIIFKDMITG…FKHGLEEEKV (173 aa)) form the TCTP domain.

It belongs to the TCTP family. As to expression, expressed by the venom gland.

Its subcellular location is the secreted. Venom protein that causes edema, enhances vascular permeability and is likely related to the inflammatory activity of the venom. The sequence is that of Translationally-controlled tumor protein homolog from Grammostola rosea (Chilean rose tarantula).